The following is a 421-amino-acid chain: ATP-dependent RNA helicase RhlB (421 aa).

Residues 9-37 (QKFSDFALHPKVVEALEKKGFHNCTPIQA) carry the Q motif motif. Positions 40–219 (LPLTLAGRDV…FEQMNNAEYI (180 aa)) constitute a Helicase ATP-binding domain. 53–60 (AQTGTGKT) provides a ligand contact to ATP. The short motif at 165–168 (DEAD) is the DEAD box element. One can recognise a Helicase C-terminal domain in the interval 245–390 (RLLQTLIEEE…VSKYNPDALM (146 aa)). Positions 392–421 (DLPKPLRLTRPRTGNGPRRTGAPRNRRRSG) are disordered. Residues 402–414 (PRTGNGPRRTGAP) show a composition bias toward low complexity.

Belongs to the DEAD box helicase family. RhlB subfamily. As to quaternary structure, component of the RNA degradosome, which is a multiprotein complex involved in RNA processing and mRNA degradation.

It localises to the cytoplasm. The catalysed reaction is ATP + H2O = ADP + phosphate + H(+). In terms of biological role, DEAD-box RNA helicase involved in RNA degradation. Has RNA-dependent ATPase activity and unwinds double-stranded RNA. The protein is ATP-dependent RNA helicase RhlB of Escherichia coli (strain SMS-3-5 / SECEC).